We begin with the raw amino-acid sequence, 230 residues long: Cytochrome b6-f complex iron-sulfur subunit, chloroplastic (230 aa).

Low complexity predominate over residues methionine 1 to serine 16. The interval methionine 1–asparagine 20 is disordered. Residues methionine 1–proline 56 constitute a chloroplast transit peptide. A helical transmembrane segment spans residues leucine 73–valine 93. In terms of domain architecture, Rieske spans alanine 116 to valine 212. [2Fe-2S] cluster contacts are provided by cysteine 158, histidine 160, cysteine 176, and histidine 179. A disulfide bridge connects residues cysteine 163 and cysteine 178.

It belongs to the Rieske iron-sulfur protein family. The 4 large subunits of the cytochrome b6-f complex are cytochrome b6, subunit IV (17 kDa polypeptide, petD), cytochrome f and the Rieske protein, while the 4 small subunits are petG, petL, petM and petN. The complex functions as a dimer. [2Fe-2S] cluster is required as a cofactor.

The protein localises to the plastid. The protein resides in the chloroplast thylakoid membrane. The catalysed reaction is 2 oxidized [plastocyanin] + a plastoquinol + 2 H(+)(in) = 2 reduced [plastocyanin] + a plastoquinone + 4 H(+)(out). Its function is as follows. Component of the cytochrome b6-f complex, which mediates electron transfer between photosystem II (PSII) and photosystem I (PSI), cyclic electron flow around PSI, and state transitions. The protein is Cytochrome b6-f complex iron-sulfur subunit, chloroplastic (petC) of Fritillaria agrestis (Stinkbells).